A 185-amino-acid polypeptide reads, in one-letter code: Signal peptidase complex subunit 3 (185 aa).

Residues 1–16 are Cytoplasmic-facing; the sequence is MHTSIQRIQQTFSQAS. The chain crosses the membrane as a helical; Signal-anchor for type II membrane protein span at residues 17-37; it reads TVLSIIAAIVFVVSYIQLVVA. The Lumenal segment spans residues 38 to 185; that stretch reads NVWSLPEANF…KGSIKFPQLV (148 aa). An N-linked (GlcNAc...) asparagine glycan is attached at N151.

It belongs to the SPCS3 family. In terms of assembly, component of the signal peptidase complex (SPC) composed of a catalytic subunit SEC11 and three accessory subunits SPC1, SPC2 and SPC3. The complex induces a local thinning of the ER membrane which is used to measure the length of the signal peptide (SP) h-region of protein substrates. This ensures the selectivity of the complex towards h-regions shorter than 18-20 amino acids. SPC associates with the translocon complex.

The protein localises to the endoplasmic reticulum membrane. In terms of biological role, essential component of the signal peptidase complex (SPC) which catalyzes the cleavage of N-terminal signal sequences from nascent proteins as they are translocated into the lumen of the endoplasmic reticulum. Essential for the SPC catalytic activity, possibly by stabilizing and positioning the active center of the complex close to the lumenal surface. Essential for viability. The chain is Signal peptidase complex subunit 3 (SPC3) from Yarrowia lipolytica (strain CLIB 122 / E 150) (Yeast).